A 247-amino-acid polypeptide reads, in one-letter code: Carboxy-S-adenosyl-L-methionine synthase (247 aa).

Residues Y39, 64–66 (GCS), 89–90 (DN), 117–118 (DI), N132, and R199 each bind S-adenosyl-L-methionine.

Belongs to the class I-like SAM-binding methyltransferase superfamily. Cx-SAM synthase family. Homodimer.

The enzyme catalyses prephenate + S-adenosyl-L-methionine = carboxy-S-adenosyl-L-methionine + 3-phenylpyruvate + H2O. Catalyzes the conversion of S-adenosyl-L-methionine (SAM) to carboxy-S-adenosyl-L-methionine (Cx-SAM). This is Carboxy-S-adenosyl-L-methionine synthase from Shigella boydii serotype 4 (strain Sb227).